Consider the following 204-residue polypeptide: Calexcitin-1 (204 aa).

3 EF-hand domains span residues 25 to 61 (FLVKKWERIFSLFFDRNASHQVDWGDFYLVVKKVRDI), 75 to 110 (SLAALWEGLCSIADADKDQLISIDEWIGLLKKTDAK), and 115 to 150 (WFKDYQNFMFKLFDVSCDGVMDLAEYTDGMSTYGFD). Asp-39, Asn-41, Ser-43, Gln-45, Asp-50, Asp-88, Asp-90, Asp-92, Glu-99, Asp-128, Ser-130, Asp-132, and Glu-139 together coordinate Ca(2+).

The sequence is that of Calexcitin-1 (cex-1) from Caenorhabditis elegans.